The sequence spans 560 residues: Glucose-6-phosphate isomerase, cytosolic (560 aa).

Ala2 carries the N-acetylalanine modification. Glu361 (proton donor) is an active-site residue. Active-site residues include His392 and Lys517.

It belongs to the GPI family. In terms of assembly, homodimer.

The protein localises to the cytoplasm. It carries out the reaction alpha-D-glucose 6-phosphate = beta-D-fructose 6-phosphate. Its pathway is carbohydrate degradation; glycolysis; D-glyceraldehyde 3-phosphate and glycerone phosphate from D-glucose: step 2/4. Its activity is regulated as follows. Inhibited by glycerol-3-P (G3P). In Arabidopsis thaliana (Mouse-ear cress), this protein is Glucose-6-phosphate isomerase, cytosolic (PGIC).